Consider the following 143-residue polypeptide: NADH-quinone oxidoreductase subunit A (143 aa).

The next 3 membrane-spanning stretches (helical) occupy residues 8-28 (FGNV…GYLT), 63-83 (FYVV…LYPW), and 90-110 (LGVF…LGLV).

It belongs to the complex I subunit 3 family. In terms of assembly, NDH-1 is composed of 14 different subunits. Subunits NuoA, H, J, K, L, M, N constitute the membrane sector of the complex.

It localises to the cell inner membrane. The enzyme catalyses a quinone + NADH + 5 H(+)(in) = a quinol + NAD(+) + 4 H(+)(out). Functionally, NDH-1 shuttles electrons from NADH, via FMN and iron-sulfur (Fe-S) centers, to quinones in the respiratory chain. The immediate electron acceptor for the enzyme in this species is believed to be a menaquinone. Couples the redox reaction to proton translocation (for every two electrons transferred, four hydrogen ions are translocated across the cytoplasmic membrane), and thus conserves the redox energy in a proton gradient. The polypeptide is NADH-quinone oxidoreductase subunit A (Chlorobium phaeobacteroides (strain DSM 266 / SMG 266 / 2430)).